A 305-amino-acid polypeptide reads, in one-letter code: Protein-methionine-sulfoxide reductase catalytic subunit MsrP (305 aa).

Positions 1–54 (MLIRKPADHLPSEITSESVYFNRRQFMAGAAGLLLSAETLAGLAAKKSPLSQLA) form a signal peptide, tat-type signal. Residues Asn-69, 72–73 (YE), Cys-126, Thr-161, Asn-209, Arg-214, and 225–227 (SIK) contribute to the Mo-molybdopterin site.

This sequence belongs to the MsrP family. As to quaternary structure, heterodimer of a catalytic subunit (MsrP) and a heme-binding subunit (MsrQ). The cofactor is Mo-molybdopterin. Predicted to be exported by the Tat system. The position of the signal peptide cleavage has not been experimentally proven.

It localises to the periplasm. It carries out the reaction L-methionyl-[protein] + a quinone + H2O = L-methionyl-(S)-S-oxide-[protein] + a quinol. The enzyme catalyses L-methionyl-[protein] + a quinone + H2O = L-methionyl-(R)-S-oxide-[protein] + a quinol. Functionally, part of the MsrPQ system that repairs oxidized periplasmic proteins containing methionine sulfoxide residues (Met-O), using respiratory chain electrons. Thus protects these proteins from oxidative-stress damage caused by reactive species of oxygen and chlorine generated by the host defense mechanisms. MsrPQ is essential for the maintenance of envelope integrity under bleach stress, rescuing a wide series of structurally unrelated periplasmic proteins from methionine oxidation. The catalytic subunit MsrP is non-stereospecific, being able to reduce both (R-) and (S-) diastereoisomers of methionine sulfoxide. The sequence is that of Protein-methionine-sulfoxide reductase catalytic subunit MsrP from Chromobacterium violaceum (strain ATCC 12472 / DSM 30191 / JCM 1249 / CCUG 213 / NBRC 12614 / NCIMB 9131 / NCTC 9757 / MK).